Reading from the N-terminus, the 394-residue chain is Na(+)/H(+) antiporter NhaA (394 aa).

Helical transmembrane passes span 11–31 (LEAA…IFAN), 59–79 (LLMW…GMEV), 95–115 (IFPA…YWFI), 125–145 (GWAI…ALLS), 155–175 (FLLA…ALFF), 177–197 (HEMS…LVAM), 203–220 (TGLI…ASVL), 254–274 (ALAP…NAGV), 296–316 (LIIG…LLGI), 328–348 (IFAI…IAGL), and 365–385 (LGIL…LKIT).

Belongs to the NhaA Na(+)/H(+) (TC 2.A.33) antiporter family.

The protein localises to the cell inner membrane. It carries out the reaction Na(+)(in) + 2 H(+)(out) = Na(+)(out) + 2 H(+)(in). Functionally, na(+)/H(+) antiporter that extrudes sodium in exchange for external protons. This is Na(+)/H(+) antiporter NhaA from Actinobacillus pleuropneumoniae serotype 7 (strain AP76).